We begin with the raw amino-acid sequence, 212 residues long: MIFDKTMLARYFIMGTQDVADEAEFLRILNQALRSGITLFQYREKGQGALVGQKKLQLAKQVRALTAQYHVPLVIDDDMALAHAIAADGIHFGQDDGRPVDNIKQSGNLFVGVSVSNQQEYQRIAHVAGIDHIGVGPIFATTSKSDAKPPIGISGLSQLIRIAHHPIVAIGGIQRDNLSKVLSTGVDGAAVISMISQSGDIQKTLADWRNRT.

4-amino-2-methyl-5-(diphosphooxymethyl)pyrimidine-binding positions include 41-45 and aspartate 76; that span reads QYREK. Mg(2+)-binding residues include aspartate 77 and aspartate 96. Serine 114 is a 4-amino-2-methyl-5-(diphosphooxymethyl)pyrimidine binding site. 141–143 is a 2-[(2R,5Z)-2-carboxy-4-methylthiazol-5(2H)-ylidene]ethyl phosphate binding site; the sequence is TTS. Residue lysine 144 participates in 4-amino-2-methyl-5-(diphosphooxymethyl)pyrimidine binding. 2-[(2R,5Z)-2-carboxy-4-methylthiazol-5(2H)-ylidene]ethyl phosphate contacts are provided by residues glycine 172 and 192–193; that span reads IS.

This sequence belongs to the thiamine-phosphate synthase family. The cofactor is Mg(2+).

The catalysed reaction is 2-[(2R,5Z)-2-carboxy-4-methylthiazol-5(2H)-ylidene]ethyl phosphate + 4-amino-2-methyl-5-(diphosphooxymethyl)pyrimidine + 2 H(+) = thiamine phosphate + CO2 + diphosphate. The enzyme catalyses 2-(2-carboxy-4-methylthiazol-5-yl)ethyl phosphate + 4-amino-2-methyl-5-(diphosphooxymethyl)pyrimidine + 2 H(+) = thiamine phosphate + CO2 + diphosphate. It carries out the reaction 4-methyl-5-(2-phosphooxyethyl)-thiazole + 4-amino-2-methyl-5-(diphosphooxymethyl)pyrimidine + H(+) = thiamine phosphate + diphosphate. Its pathway is cofactor biosynthesis; thiamine diphosphate biosynthesis; thiamine phosphate from 4-amino-2-methyl-5-diphosphomethylpyrimidine and 4-methyl-5-(2-phosphoethyl)-thiazole: step 1/1. Functionally, condenses 4-methyl-5-(beta-hydroxyethyl)thiazole monophosphate (THZ-P) and 2-methyl-4-amino-5-hydroxymethyl pyrimidine pyrophosphate (HMP-PP) to form thiamine monophosphate (TMP). In Leuconostoc citreum (strain KM20), this protein is Thiamine-phosphate synthase.